An 82-amino-acid chain; its full sequence is Small ribosomal subunit protein bS18 (82 aa).

The protein belongs to the bacterial ribosomal protein bS18 family. Part of the 30S ribosomal subunit. Forms a tight heterodimer with protein bS6.

Binds as a heterodimer with protein bS6 to the central domain of the 16S rRNA, where it helps stabilize the platform of the 30S subunit. The sequence is that of Small ribosomal subunit protein bS18 from Chlamydia caviae (strain ATCC VR-813 / DSM 19441 / 03DC25 / GPIC) (Chlamydophila caviae).